Consider the following 149-residue polypeptide: uncharacterized protein (149 aa).

The tract at residues 34–94 (HTPCLPKVPR…NPIGSQRIHS (61 aa)) is disordered. Over residues 56–66 (QSPHRQGDRRR) the composition is skewed to basic and acidic residues.

It is found in the mitochondrion. This is an uncharacterized protein from Arabidopsis thaliana (Mouse-ear cress).